Reading from the N-terminus, the 173-residue chain is Flagellar assembly factor FliW (173 aa).

The tract at residues S152–E173 is disordered.

It belongs to the FliW family. In terms of assembly, interacts with translational regulator CsrA and flagellin(s).

It is found in the cytoplasm. Acts as an anti-CsrA protein, binds CsrA and prevents it from repressing translation of its target genes, one of which is flagellin. Binds to flagellin and participates in the assembly of the flagellum. The sequence is that of Flagellar assembly factor FliW from Nitratidesulfovibrio vulgaris (strain ATCC 29579 / DSM 644 / CCUG 34227 / NCIMB 8303 / VKM B-1760 / Hildenborough) (Desulfovibrio vulgaris).